Here is a 1019-residue protein sequence, read N- to C-terminus: TOG array regulator of axonemal microtubules protein 2 (1019 aa).

Disordered regions lie at residues 28-54 (AGPR…PEPR), 131-158 (RRLS…PLHS), 249-311 (TPSR…AKKP), and 991-1019 (SLGG…FQLD). Residues 1007–1019 (SKTTGSSYPFQLD) show a composition bias toward polar residues.

Belongs to the Crescerin family.

The sequence is that of TOG array regulator of axonemal microtubules protein 2 from Homo sapiens (Human).